The primary structure comprises 440 residues: APO protein 2, chloroplastic (440 aa).

The N-terminal 62 residues, methionine 1 to leucine 62, are a transit peptide targeting the chloroplast. The segment covering alanine 106 to aspartate 115 has biased composition (basic and acidic residues). Positions alanine 106–asparagine 126 are disordered. 2 consecutive APO domains span residues alanine 162–glutamate 247 and valine 332–glutamate 417.

It belongs to the APO family.

It is found in the plastid. The protein localises to the chloroplast. Its function is as follows. May be involved in the stable assembly of several 4Fe-4S cluster-containing complexes of chloroplasts. The sequence is that of APO protein 2, chloroplastic (APO2) from Arabidopsis thaliana (Mouse-ear cress).